A 227-amino-acid chain; its full sequence is Probable minor pilin MMP0600 (227 aa).

The propeptide occupies 1–7 (MAKFSKG). Residues 8–16 (QISIELILL) carry the QXSXEXXXL motif.

Post-translationally, the N-terminus is probably cleaved by the prepilin peptidase EppA, which recognizes the class III signal sequence.

It localises to the secreted. The protein localises to the cell surface. The protein resides in the fimbrium. This is Probable minor pilin MMP0600 from Methanococcus maripaludis (strain DSM 14266 / JCM 13030 / NBRC 101832 / S2 / LL).